The following is a 148-amino-acid chain: 3-dehydroquinate dehydratase (148 aa).

The active-site Proton acceptor is the Y24. Substrate contacts are provided by N75, H81, and D88. H101 (proton donor) is an active-site residue. Substrate-binding positions include 102-103 (LS) and R112.

It belongs to the type-II 3-dehydroquinase family. Homododecamer.

It carries out the reaction 3-dehydroquinate = 3-dehydroshikimate + H2O. Its pathway is metabolic intermediate biosynthesis; chorismate biosynthesis; chorismate from D-erythrose 4-phosphate and phosphoenolpyruvate: step 3/7. Its function is as follows. Catalyzes a trans-dehydration via an enolate intermediate. The polypeptide is 3-dehydroquinate dehydratase (Rhizobium meliloti (strain 1021) (Ensifer meliloti)).